The sequence spans 160 residues: Putative 4-hydroxy-4-methyl-2-oxoglutarate aldolase (160 aa).

Residues 75-78 (GDLI) and R97 each bind substrate. Position 98 (D98) interacts with a divalent metal cation.

The protein belongs to the class II aldolase/RraA-like family. Homotrimer. It depends on a divalent metal cation as a cofactor.

It catalyses the reaction 4-hydroxy-4-methyl-2-oxoglutarate = 2 pyruvate. The catalysed reaction is oxaloacetate + H(+) = pyruvate + CO2. Its function is as follows. Catalyzes the aldol cleavage of 4-hydroxy-4-methyl-2-oxoglutarate (HMG) into 2 molecules of pyruvate. Also contains a secondary oxaloacetate (OAA) decarboxylase activity due to the common pyruvate enolate transition state formed following C-C bond cleavage in the retro-aldol and decarboxylation reactions. The chain is Putative 4-hydroxy-4-methyl-2-oxoglutarate aldolase from Rhodospirillum centenum (strain ATCC 51521 / SW).